The primary structure comprises 393 residues: Na(+)/H(+) antiporter NhaA (393 aa).

The next 11 helical transmembrane spans lie at 14-34 (AAGMMLMMATVLAIALANWSV), 60-80 (LLLWINDALMAIFFLLIGLEV), 96-116 (MLPLAAAVGGMVFPALLFLLF), 125-145 (AGWAIPAATDIAFAIGVLTLL), 155-175 (VFLLALAIIDDLGAILIIALF), 179-199 (QVFWPALAGAVLAIAVLAYMN), 218-238 (VCILKCGVHATLAGVIVGFFI), 263-283 (FLIVPLFAFANAGIVLQGIVL), 292-312 (LGIAAGLLLGKPLGITLFSWL), 330-350 (IVAVSVLCGIGFTMSIFITLL), and 362-382 (YAKLGILLASGLAALLGYLAL).

Belongs to the NhaA Na(+)/H(+) (TC 2.A.33) antiporter family.

The protein localises to the cell inner membrane. The enzyme catalyses Na(+)(in) + 2 H(+)(out) = Na(+)(out) + 2 H(+)(in). Its function is as follows. Na(+)/H(+) antiporter that extrudes sodium in exchange for external protons. The protein is Na(+)/H(+) antiporter NhaA of Pectobacterium atrosepticum (strain SCRI 1043 / ATCC BAA-672) (Erwinia carotovora subsp. atroseptica).